The following is a 281-amino-acid chain: Glyoxalase 1 (281 aa).

2 VOC domains span residues 4-127 and 132-251; these read RALH…IGKA and KVLR…FVGD.

Belongs to the glyoxalase I family.

In terms of biological role, thought to act as a glyoxalase. May remove methylglyoxal from mitochondrial proteins. Has roles in reducing oxidative stress and increasing lifespan. In Caenorhabditis briggsae, this protein is Glyoxalase 1.